We begin with the raw amino-acid sequence, 827 residues long: Probable beta-glucosidase H (827 aa).

Residue D223 is part of the active site. The 160-residue stretch at 387–546 (RLLTNAVMHF…DSAEMVRSAV (160 aa)) folds into the PA14 domain. N471, N594, N600, and N625 each carry an N-linked (GlcNAc...) asparagine glycan.

The protein belongs to the glycosyl hydrolase 3 family.

Its subcellular location is the secreted. It catalyses the reaction Hydrolysis of terminal, non-reducing beta-D-glucosyl residues with release of beta-D-glucose.. The protein operates within glycan metabolism; cellulose degradation. Functionally, beta-glucosidases are one of a number of cellulolytic enzymes involved in the degradation of cellulosic biomass. Catalyzes the last step releasing glucose from the inhibitory cellobiose. This chain is Probable beta-glucosidase H (bglH), found in Aspergillus oryzae (strain ATCC 42149 / RIB 40) (Yellow koji mold).